The chain runs to 962 residues: Protein suppressor of underreplication (962 aa).

5 disordered regions span residues E353–A413, T438–S590, N658–L712, Q866–T900, and Q916–K962. Positions P372 to K382 are enriched in basic residues. Residues P386–S395 show a composition bias toward basic and acidic residues. Composition is skewed to polar residues over residues T438 to I448 and L480 to N489. Residues V524–K552 are compositionally biased toward basic and acidic residues. Over residues R553–K562 the composition is skewed to basic residues. Residues L564–N576 show a composition bias toward polar residues. Basic residues predominate over residues R673–K683. Composition is skewed to polar residues over residues R703–L712 and Q866–V880. Positions K885–A894 are enriched in basic residues. The segment covering Q916–A944 has biased composition (polar residues). A compositionally biased stretch (basic residues) spans T953–K962.

The protein resides in the nucleus. Its subcellular location is the chromosome. Required for underreplication of DNA, which is found in many late replicating euchromatic regions of salivary gland polytene chromosomes. Controls chromatin organization in polytene chromosomes. The protein is Protein suppressor of underreplication (SuUR) of Drosophila erecta (Fruit fly).